Consider the following 141-residue polypeptide: Hemoglobin subunit alpha-D (141 aa).

In terms of domain architecture, Globin spans 1-141; that stretch reads MLTAEDKKLI…VAAVLAEKYR (141 aa). Residues histidine 58 and histidine 87 each contribute to the heme b site.

It belongs to the globin family. As to quaternary structure, heterotetramer of two alpha-D chains and two beta chains. As to expression, red blood cells.

In terms of biological role, involved in oxygen transport from the lung to the various peripheral tissues. The chain is Hemoglobin subunit alpha-D (HBAD) from Apus apus (Common swift).